The sequence spans 32 residues: Mu-theraphotoxin-Se1a (32 aa).

3 disulfide bridges follow: cysteine 2–cysteine 17, cysteine 9–cysteine 22, and cysteine 16–cysteine 28.

Belongs to the neurotoxin 10 (Hwtx-1) family. Expressed by the venom gland.

It is found in the secreted. Voltage-gated sodium channel Nav1.7/SCN9A inhibitor. This chain is Mu-theraphotoxin-Se1a, found in Selenocosmia effera (Tarantula spider).